The chain runs to 419 residues: AT-hook motif nuclear-localized protein 4 (419 aa).

Disordered stretches follow at residues 1–168 (MEER…SGGG), 301–337 (QQQQQQIKKQRRERLGIPTTTQASNISFGGSAEDPKA), and 382–419 (DLFSSLPGEDREEDEDDLEGEDDEEFGGHSESDTEVPS). Residues 78-86 (KKKRGRPRK) carry the Bipartite nuclear localization signal motif. The segment at residues 78-90 (KKKRGRPRKYNPD) is a DNA-binding region (a.T hook). A compositionally biased stretch (polar residues) spans 101–112 (PISSSVPLTSEF). A compositionally biased stretch (basic residues) spans 115 to 130 (RKRGRGRGRGRGRGRG). The segment covering 136-148 (GSREPNNNNNDNN) has biased composition (low complexity). In terms of domain architecture, PPC spans 174–314 (VSPSFTPHVL…QQIKKQRRER (141 aa)). A compositionally biased stretch (polar residues) spans 318 to 328 (PTTTQASNISF). Residues 391 to 406 (DREEDEDDLEGEDDEE) show a composition bias toward acidic residues.

As to quaternary structure, homodimer. Interacts with AHL3. In terms of tissue distribution, predominantly expressed in the stele of the root meristem with a specificity to the procambium.

It is found in the nucleus. Its function is as follows. Transcription factor that specifically binds AT-rich DNA sequences related to the nuclear matrix attachment regions (MARs). Acts redundantly with AHL3 to regulate the formation of tissue boundary between the xylem and procambium in the root meristem. Cell-to-cell movement of AHL4 from the procambium to the xylem is critical for its function in root vascular patterning. This chain is AT-hook motif nuclear-localized protein 4, found in Arabidopsis thaliana (Mouse-ear cress).